Reading from the N-terminus, the 98-residue chain is NADH-ubiquinone oxidoreductase chain 4L (98 aa).

3 helical membrane-spanning segments follow: residues 1 to 21 (MALTYMNMALAFTVSLLGLLM), 29 to 49 (SLLCLEGMMLSLFVTMSLTIL), and 61 to 81 (IILLVFAACEAALGLSLLVMV).

Belongs to the complex I subunit 4L family. Core subunit of respiratory chain NADH dehydrogenase (Complex I) which is composed of 45 different subunits.

Its subcellular location is the mitochondrion inner membrane. The catalysed reaction is a ubiquinone + NADH + 5 H(+)(in) = a ubiquinol + NAD(+) + 4 H(+)(out). Functionally, core subunit of the mitochondrial membrane respiratory chain NADH dehydrogenase (Complex I) which catalyzes electron transfer from NADH through the respiratory chain, using ubiquinone as an electron acceptor. Part of the enzyme membrane arm which is embedded in the lipid bilayer and involved in proton translocation. The sequence is that of NADH-ubiquinone oxidoreductase chain 4L (MT-ND4L) from Pteropus dasymallus (Ryukyu flying fox).